We begin with the raw amino-acid sequence, 350 residues long: Probable arabinogalactan endo-beta-1,4-galactanase A (350 aa).

The signal sequence occupies residues 1 to 16 (MIYPLLLSALPLLSSA). An N-linked (GlcNAc...) asparagine glycan is attached at N128. E152 serves as the catalytic Proton donor. E262 functions as the Nucleophile in the catalytic mechanism.

It belongs to the glycosyl hydrolase 53 family.

It is found in the secreted. The enzyme catalyses The enzyme specifically hydrolyzes (1-&gt;4)-beta-D-galactosidic linkages in type I arabinogalactans.. Endogalactanase involved in the degradation of plant cell wall polysaccharides, and more particularly of hairy regions of pectin. In Aspergillus tubingensis, this protein is Probable arabinogalactan endo-beta-1,4-galactanase A (galA).